The following is a 549-amino-acid chain: Beta-hexosaminidase Amuc_0868 (549 aa).

The N-terminal stretch at 1–28 (MISKCTFSATVFSLFSLCWGAPSSPVLE) is a signal peptide. Arg161 serves as a coordination point for substrate. Residues Asp190 and His260 each act as charge relay system in the active site. Position 326 (Asp326) interacts with substrate. The active-site Charge relay system is the Glu327. Substrate is bound by residues Trp393, 420–422 (YFD), and 474–476 (WTE). Residues 526–549 (GVNYKRPDNGAPAQPKAVITRERR) are disordered.

The protein belongs to the glycosyl hydrolase 20 family.

The enzyme catalyses Hydrolysis of terminal non-reducing N-acetyl-D-hexosamine residues in N-acetyl-beta-D-hexosaminides.. With respect to regulation, inhibited strongly by Cu(2+), Zn(2+), Cd(2+) and Ni(2+) ions. No effect on activity with Na(+), Li(+), K(+), Ca(2+), Mg(2+) or Mn(2+) ions. Its function is as follows. Potentially capable of cleaving the specific glycoside linkages in the process of mucin degradation in human intestinal tract. Hydrolyzes chromogenic substrates pNP-beta-GlcNAc with high activity and pNP-beta-GalNAc to a lesser extent, but not pNP-beta-glucose or pNP-beta-galactose. This Akkermansia muciniphila (strain ATCC BAA-835 / DSM 22959 / JCM 33894 / BCRC 81048 / CCUG 64013 / CIP 107961 / Muc) protein is Beta-hexosaminidase Amuc_0868.